The chain runs to 116 residues: Sperm mitochondrial-associated cysteine-rich protein (116 aa).

7 tandem repeats follow at residues 6–13, 14–21, 30–37, 38–45, 46–53, 54–61, and 62–68. The interval 6–68 is 7 X 7 (OR 8) AA approximate repeats; the sequence is KHSKCCPAKG…CQPKPPCCIQ (63 aa). The segment at 80–116 is disordered; sequence VSPLNMESEPNSPQTQDKGCQTQQQPHSPQNESRPSK. Over residues 93–104 the composition is skewed to low complexity; that stretch reads QTQDKGCQTQQQ. The span at 105-116 shows a compositional bias: polar residues; the sequence is PHSPQNESRPSK.

As to expression, testis. Is selectively expressed in the spermatids of seminiferous tubules.

Its subcellular location is the cytoplasm. It is found in the mitochondrion membrane. Its function is as follows. Involved in sperm motility. Its absence is associated with genetic background dependent male infertility. Infertility may be due to reduced sperm motility in the female reproductive tract and inability to penetrate the oocyte zona pellucida. This Homo sapiens (Human) protein is Sperm mitochondrial-associated cysteine-rich protein (SMCP).